The chain runs to 151 residues: Large ribosomal subunit protein bL9 (151 aa).

It belongs to the bacterial ribosomal protein bL9 family.

Functionally, binds to the 23S rRNA. The polypeptide is Large ribosomal subunit protein bL9 (Chlorobium luteolum (strain DSM 273 / BCRC 81028 / 2530) (Pelodictyon luteolum)).